Consider the following 344-residue polypeptide: Mitochondrial mRNA pseudouridine synthase RPUSD3 (344 aa).

The transit peptide at 1 to 41 (MGGWRVLGQASGGWRRGLGIRATSTAAGFGTKARHQLQRRG) directs the protein to the mitochondrion. The interval 29-59 (FGTKARHQLQRRGASKPSDPPGDQPFPGLLR) is disordered. The segment covering 32–42 (KARHQLQRRGA) has biased composition (basic residues). Serine 64 carries the post-translational modification Phosphoserine.

Belongs to the pseudouridine synthase RluA family. As to quaternary structure, forms a regulatory protein-RNA complex, consisting of RCC1L, NGRN, RPUSD3, RPUSD4, TRUB2, FASTKD2 and 16S mt-rRNA.

It localises to the mitochondrion matrix. It catalyses the reaction a uridine in mRNA = a pseudouridine in mRNA. In terms of biological role, catalyzes uridine to pseudouridine isomerization (pseudouridylation) of specific mitochondrial mRNAs (mt-mRNAs), a post-transcriptional modification necessary for their translation. Acts at position 390 in COXI mt-mRNA and at position 697-699 in mitochondrial COXIII mt-mRNA. As a component of a functional protein-RNA module, consisting of RCC1L, NGRN, RPUSD3, RPUSD4, TRUB2, FASTKD2 and 16S mitochondrial ribosomal RNA (16S mt-rRNA), controls 16S mt-rRNA abundance and may play a role in mitochondrial ribosome biogenesis. This Bos taurus (Bovine) protein is Mitochondrial mRNA pseudouridine synthase RPUSD3 (RPUSD3).